A 106-amino-acid chain; its full sequence is Cell division topological specificity factor (106 aa).

The protein belongs to the MinE family.

Its function is as follows. Prevents the cell division inhibition by proteins MinC and MinD at internal division sites while permitting inhibition at polar sites. This ensures cell division at the proper site by restricting the formation of a division septum at the midpoint of the long axis of the cell. This Prochlorococcus marinus subsp. pastoris (strain CCMP1986 / NIES-2087 / MED4) protein is Cell division topological specificity factor.